A 144-amino-acid chain; its full sequence is Large ribosomal subunit protein uL13 (144 aa).

The protein belongs to the universal ribosomal protein uL13 family. As to quaternary structure, part of the 50S ribosomal subunit.

This protein is one of the early assembly proteins of the 50S ribosomal subunit, although it is not seen to bind rRNA by itself. It is important during the early stages of 50S assembly. This is Large ribosomal subunit protein uL13 from Buchnera aphidicola subsp. Baizongia pistaciae (strain Bp).